The sequence spans 448 residues: Binary larvicide subunit BinB (448 aa).

The beta-trefoil domain stretch occupies residues 1 to 198; sequence MCDSKDNSGV…TAFVNSSFYA (198 aa). Cys67 and Cys161 are joined by a disulfide. Residues 199 to 448 form a probable pore-forming domain region; that stretch reads AAIPQLPQTS…NEELIPKINQ (250 aa).

This sequence belongs to the toxin_10 family. As to quaternary structure, forms a heterodimer with BinA. Upon toxin crystal solubilization with NaOH at pH 12, only the 63-kDa (binB) and 43-kDa (binA) proteins were detected. Interacts with mosquito protein Cpm1 which acts as its host receptor. In terms of processing, processed by proteases extracted from C.pipiens larval gut; unlike its partner BinA, it does not form a stable digestion product.

The protein resides in the spore. It localises to the perispore. Functionally, component of a binary toxin active against Culex and some Aedes mosquito larvae. This subunit alone has no toxic larvicidal activity. This subunit is responsible for localized binding to specific regions of the host larval gut. Binary toxin internalization into host gut cells requires both proteins. This Lysinibacillus sphaericus (Bacillus sphaericus) protein is Binary larvicide subunit BinB (binB).